The primary structure comprises 95 residues: Beta-defensin 132 (95 aa).

Positions 1 to 22 (MKFLLLVLAALRFLTQVIPASA) are cleaved as a signal peptide. 3 disulfide bridges follow: Cys27-Cys55, Cys35-Cys49, and Cys39-Cys56. The segment at 72–95 (GNHWQSRRRNTQRKDKKQQTTVTS) is disordered. Residues 76-87 (QSRRRNTQRKDK) show a composition bias toward basic residues.

It belongs to the beta-defensin family.

The protein localises to the secreted. In terms of biological role, has antibacterial activity. This is Beta-defensin 132 (DEFB132) from Pongo pygmaeus (Bornean orangutan).